The primary structure comprises 208 residues: Probable nicotinate-nucleotide adenylyltransferase (208 aa).

Belongs to the NadD family.

It catalyses the reaction nicotinate beta-D-ribonucleotide + ATP + H(+) = deamido-NAD(+) + diphosphate. It functions in the pathway cofactor biosynthesis; NAD(+) biosynthesis; deamido-NAD(+) from nicotinate D-ribonucleotide: step 1/1. Its function is as follows. Catalyzes the reversible adenylation of nicotinate mononucleotide (NaMN) to nicotinic acid adenine dinucleotide (NaAD). The polypeptide is Probable nicotinate-nucleotide adenylyltransferase (Acidothermus cellulolyticus (strain ATCC 43068 / DSM 8971 / 11B)).